The chain runs to 237 residues: Carboxy-S-adenosyl-L-methionine synthase (237 aa).

Residues Tyr40, 65 to 67, 116 to 117, Asn131, and Arg194 contribute to the S-adenosyl-L-methionine site; these read GCS and DI.

Belongs to the class I-like SAM-binding methyltransferase superfamily. Cx-SAM synthase family. Homodimer.

It carries out the reaction prephenate + S-adenosyl-L-methionine = carboxy-S-adenosyl-L-methionine + 3-phenylpyruvate + H2O. In terms of biological role, catalyzes the conversion of S-adenosyl-L-methionine (SAM) to carboxy-S-adenosyl-L-methionine (Cx-SAM). In Dichelobacter nodosus (strain VCS1703A), this protein is Carboxy-S-adenosyl-L-methionine synthase.